The chain runs to 189 residues: Elongation factor P (189 aa).

Lysine 34 bears the N6-(3,6-diaminohexanoyl)-5-hydroxylysine mark.

Belongs to the elongation factor P family. In terms of processing, may be beta-lysylated on the epsilon-amino group of Lys-34 by the combined action of EpmA and EpmB, and then hydroxylated on the C5 position of the same residue by EpmC (if this protein is present). Lysylation is critical for the stimulatory effect of EF-P on peptide-bond formation. The lysylation moiety may extend toward the peptidyltransferase center and stabilize the terminal 3-CCA end of the tRNA. Hydroxylation of the C5 position on Lys-34 may allow additional potential stabilizing hydrogen-bond interactions with the P-tRNA.

Its subcellular location is the cytoplasm. It functions in the pathway protein biosynthesis; polypeptide chain elongation. Involved in peptide bond synthesis. Alleviates ribosome stalling that occurs when 3 or more consecutive Pro residues or the sequence PPG is present in a protein, possibly by augmenting the peptidyl transferase activity of the ribosome. Modification of Lys-34 is required for alleviation. This Alcanivorax borkumensis (strain ATCC 700651 / DSM 11573 / NCIMB 13689 / SK2) protein is Elongation factor P.